Reading from the N-terminus, the 208-residue chain is GATA transcription factor 20 (208 aa).

The segment at 94–119 (CASCDTTSTPLWRNGPKGPKSLCNAC) adopts a GATA-type zinc-finger fold.

This sequence belongs to the type IV zinc-finger family. Class B subfamily.

It localises to the nucleus. Its function is as follows. Transcriptional regulator that specifically binds 5'-GATA-3' or 5'-GAT-3' motifs within gene promoters. The polypeptide is GATA transcription factor 20 (Arabidopsis thaliana (Mouse-ear cress)).